We begin with the raw amino-acid sequence, 330 residues long: 5-dehydro-2-deoxygluconokinase (330 aa).

This sequence belongs to the carbohydrate kinase PfkB family.

It carries out the reaction 5-dehydro-2-deoxy-D-gluconate + ATP = 6-phospho-5-dehydro-2-deoxy-D-gluconate + ADP + H(+). It participates in polyol metabolism; myo-inositol degradation into acetyl-CoA; acetyl-CoA from myo-inositol: step 5/7. Its function is as follows. Catalyzes the phosphorylation of 5-dehydro-2-deoxy-D-gluconate (2-deoxy-5-keto-D-gluconate or DKG) to 6-phospho-5-dehydro-2-deoxy-D-gluconate (DKGP). The chain is 5-dehydro-2-deoxygluconokinase from Bacillus velezensis (strain DSM 23117 / BGSC 10A6 / LMG 26770 / FZB42) (Bacillus amyloliquefaciens subsp. plantarum).